The following is an 895-amino-acid chain: Zinc finger protein 281 (895 aa).

Disordered stretches follow at residues 1–44 (MKIG…EMEP) and 63–113 (FTRP…AFPS). Lys-2 is covalently cross-linked (Glycyl lysine isopeptide (Lys-Gly) (interchain with G-Cter in SUMO2)). The segment covering 7–36 (FLSGGGGTGSSGGSGSGGGGSGGGGGGGSS) has biased composition (gly residues). Residues Arg-65, Lys-101, and Lys-128 each participate in a glycyl lysine isopeptide (Lys-Gly) (interchain with G-Cter in SUMO2) cross-link. Composition is skewed to basic and acidic residues over residues 130–140 (EKPADPEEQQS) and 202–218 (RTDD…DTNV). Disordered regions lie at residues 130 to 149 (EKPA…HHHY) and 183 to 253 (HVQQ…EGAI). Residues Lys-213, Lys-219, Lys-225, Lys-232, Lys-242, and Lys-259 each participate in a glycyl lysine isopeptide (Lys-Gly) (interchain with G-Cter in SUMO2) cross-link. 3 consecutive C2H2-type zinc fingers follow at residues 261–283 (HICD…VLIH), 289–311 (FQCS…EKIH), and 317–339 (FGCD…KRTH). Glycyl lysine isopeptide (Lys-Gly) (interchain with G-Cter in SUMO2) cross-links involve residues Lys-301 and Lys-325. The segment at 345 to 367 (YKCDTCQQYFSRTDRLLKHRRTC) adopts a C2H2-type 4; atypical zinc-finger fold. Residue Lys-373 forms a Glycyl lysine isopeptide (Lys-Gly) (interchain with G-Cter in SUMO2) linkage. The segment at 377–427 (SAEPGSSNHTNMGNLAVLSQGNTSSSRRKTKSKSIAIENKEQKTGKTNESQ) is disordered. Polar residues predominate over residues 379 to 398 (EPGSSNHTNMGNLAVLSQGN). Phosphoserine is present on Ser-395. Glycyl lysine isopeptide (Lys-Gly) (interchain with G-Cter in SUMO2) cross-links involve residues Lys-409, Lys-416, Lys-460, and Lys-477. Ser-484 carries the post-translational modification Phosphoserine. Glycyl lysine isopeptide (Lys-Gly) (interchain with G-Cter in SUMO2) cross-links involve residues Lys-493, Lys-498, Lys-539, Lys-599, Lys-617, and Lys-622. The interval 638 to 660 (SGEHSELVQEENLSPGTQTPSND) is disordered. Residues 648 to 660 (ENLSPGTQTPSND) show a composition bias toward polar residues. The residue at position 651 (Ser-651) is a Phosphoserine. Residues Lys-661 and Lys-670 each participate in a glycyl lysine isopeptide (Lys-Gly) (interchain with G-Cter in SUMO2) cross-link. Residues 778–789 (SSAFQSSSQKLT) show a composition bias toward polar residues. The interval 778 to 817 (SSAFQSSSQKLTSQKEQKNLESSTGFQIPSQELASQIDPQ) is disordered. Ser-785 carries the phosphoserine modification. Residues Lys-787, Lys-792, and Lys-795 each participate in a glycyl lysine isopeptide (Lys-Gly) (interchain with G-Cter in SUMO2) cross-link. Positions 797 to 815 (LESSTGFQIPSQELASQID) are enriched in polar residues. Ser-807 carries the phosphoserine modification. Residues Lys-818 and Lys-840 each participate in a glycyl lysine isopeptide (Lys-Gly) (interchain with G-Cter in SUMO2) cross-link. Position 888 is a phosphothreonine (Thr-888).

Belongs to the krueppel C2H2-type zinc-finger protein family.

Its subcellular location is the nucleus. Functionally, transcription repressor that plays a role in regulation of embryonic stem cells (ESCs) differentiation. Required for ESCs differentiation and acts by mediating autorepression of NANOG in ESCs: binds to the NANOG promoter and promotes association of NANOG protein to its own promoter and recruits the NuRD complex, which deacetylates histones. Not required for establishement and maintenance of ESCs. Represses the transcription of a number of genes including GAST, ODC1 and VIM. Binds to the G-rich box in the enhancer region of these genes. In Homo sapiens (Human), this protein is Zinc finger protein 281 (ZNF281).